The primary structure comprises 332 residues: 2-hydroxyacid dehydrogenase homolog 2 (332 aa).

Residues 154–155 (KI), 233–235 (TSR), and Asp259 contribute to the NAD(+) site. Arg235 is an active-site residue. Glu264 is a catalytic residue. Residue His296 is the Proton donor of the active site. 296–299 (HQAF) is an NAD(+) binding site.

The protein belongs to the D-isomer specific 2-hydroxyacid dehydrogenase family.

It localises to the cytoplasm. It is found in the nucleus. This is 2-hydroxyacid dehydrogenase homolog 2 from Schizosaccharomyces pombe (strain 972 / ATCC 24843) (Fission yeast).